We begin with the raw amino-acid sequence, 273 residues long: S-adenosylmethionine decarboxylase proenzyme (273 aa).

Ser118 acts as the Schiff-base intermediate with substrate; via pyruvic acid in catalysis. Ser118 carries the pyruvic acid (Ser); by autocatalysis modification. The Proton acceptor; for processing activity role is filled by His123. The Proton donor; for catalytic activity role is filled by Cys146.

Belongs to the prokaryotic AdoMetDC family. Type 2 subfamily. Heterooctamer of four alpha and four beta chains arranged as a tetramer of alpha/beta heterodimers. The cofactor is pyruvate. In terms of processing, is synthesized initially as an inactive proenzyme. Formation of the active enzyme involves a self-maturation process in which the active site pyruvoyl group is generated from an internal serine residue via an autocatalytic post-translational modification. Two non-identical subunits are generated from the proenzyme in this reaction, and the pyruvate is formed at the N-terminus of the alpha chain, which is derived from the carboxyl end of the proenzyme. The post-translation cleavage follows an unusual pathway, termed non-hydrolytic serinolysis, in which the side chain hydroxyl group of the serine supplies its oxygen atom to form the C-terminus of the beta chain, while the remainder of the serine residue undergoes an oxidative deamination to produce ammonia and the pyruvoyl group blocking the N-terminus of the alpha chain.

The enzyme catalyses S-adenosyl-L-methionine + H(+) = S-adenosyl 3-(methylsulfanyl)propylamine + CO2. It functions in the pathway amine and polyamine biosynthesis; S-adenosylmethioninamine biosynthesis; S-adenosylmethioninamine from S-adenosyl-L-methionine: step 1/1. In terms of biological role, catalyzes the decarboxylation of S-adenosylmethionine to S-adenosylmethioninamine (dcAdoMet), the propylamine donor required for the synthesis of the polyamines spermine and spermidine from the diamine putrescine. In Alkalilimnicola ehrlichii (strain ATCC BAA-1101 / DSM 17681 / MLHE-1), this protein is S-adenosylmethionine decarboxylase proenzyme.